Consider the following 132-residue polypeptide: MSYFKRNEGTIVFAFASIGFIAFYIINYYIRRCRNRAAAAGDIEEARMSPRRPPRGLDAEAIKSFPSFVYTEARGIEPGIGELECVVCLNEFKDDETLRLVPPCVHVFHADCVDIWLSHSSTCPICRAKVVP.

A helical transmembrane segment spans residues 10-30 (TIVFAFASIGFIAFYIINYYI). The segment at 85-127 (CVVCLNEFKDDETLRLVPPCVHVFHADCVDIWLSHSSTCPICR) adopts an RING-type; atypical zinc-finger fold.

It belongs to the RING-type zinc finger family. ATL subfamily.

The protein localises to the membrane. The catalysed reaction is S-ubiquitinyl-[E2 ubiquitin-conjugating enzyme]-L-cysteine + [acceptor protein]-L-lysine = [E2 ubiquitin-conjugating enzyme]-L-cysteine + N(6)-ubiquitinyl-[acceptor protein]-L-lysine.. The protein operates within protein modification; protein ubiquitination. The polypeptide is RING-H2 finger protein ATL39 (ATL39) (Arabidopsis thaliana (Mouse-ear cress)).